Consider the following 107-residue polypeptide: Large ribosomal subunit protein uL24 (107 aa).

This sequence belongs to the universal ribosomal protein uL24 family. As to quaternary structure, part of the 50S ribosomal subunit.

In terms of biological role, one of two assembly initiator proteins, it binds directly to the 5'-end of the 23S rRNA, where it nucleates assembly of the 50S subunit. Functionally, one of the proteins that surrounds the polypeptide exit tunnel on the outside of the subunit. The protein is Large ribosomal subunit protein uL24 of Nitratidesulfovibrio vulgaris (strain DSM 19637 / Miyazaki F) (Desulfovibrio vulgaris).